The following is a 526-amino-acid chain: Light-independent protochlorophyllide reductase subunit B (526 aa).

Asp-36 lines the [4Fe-4S] cluster pocket. The Proton donor role is filled by Asp-290. 425–426 is a substrate binding site; sequence GL.

The protein belongs to the ChlB/BchB/BchZ family. Protochlorophyllide reductase is composed of three subunits; ChlL, ChlN and ChlB. Forms a heterotetramer of two ChlB and two ChlN subunits. The cofactor is [4Fe-4S] cluster.

It carries out the reaction chlorophyllide a + oxidized 2[4Fe-4S]-[ferredoxin] + 2 ADP + 2 phosphate = protochlorophyllide a + reduced 2[4Fe-4S]-[ferredoxin] + 2 ATP + 2 H2O. It functions in the pathway porphyrin-containing compound metabolism; chlorophyll biosynthesis (light-independent). Its function is as follows. Component of the dark-operative protochlorophyllide reductase (DPOR) that uses Mg-ATP and reduced ferredoxin to reduce ring D of protochlorophyllide (Pchlide) to form chlorophyllide a (Chlide). This reaction is light-independent. The NB-protein (ChlN-ChlB) is the catalytic component of the complex. This is Light-independent protochlorophyllide reductase subunit B from Prochlorococcus marinus (strain MIT 9515).